We begin with the raw amino-acid sequence, 312 residues long: MSQLNSVWVFSDNPERYAELFGGAQQWGQQVYAIVQNTDQAQAVMPYGPKCLYVLAQNDALQRTENYAESIAALLKDKHPAMLLLAATKRGKALAARLSVQLNAALVNDATAVDIVDGHICAEHRMYGGLAFAQEKINSPLAIITLAPGVQEPCTSDTSHQCPTETVPYVAPRHEILCRERRAKAASSVDLSKAKRVVGVGRGLAAQDDLKMVHELAAVLNAEVGCSRPIAEGENWMERERYIGVSGVLLKSDLYLTLGISGQIQHMVGGNGAKVIVAINKDKNAPIFNYADYGLVGDIYKVVPALISQLSR.

L254–D282 serves as a coordination point for FAD.

This sequence belongs to the ETF alpha-subunit/FixB family. YdiR and YdiQ form a heterodimer.

May play a role in a redox process. In Escherichia coli (strain K12), this protein is Putative electron transfer flavoprotein subunit YdiR (ydiR).